We begin with the raw amino-acid sequence, 589 residues long: UvrABC system protein C (589 aa).

The region spanning 14 to 91 (HKPGCYLWKD…IAKYKPKYNM (78 aa)) is the GIY-YIG domain.

Belongs to the UvrC family. As to quaternary structure, interacts with UvrB in an incision complex.

It is found in the cytoplasm. Its function is as follows. The UvrABC repair system catalyzes the recognition and processing of DNA lesions. UvrC both incises the 5' and 3' sides of the lesion. The N-terminal half is responsible for the 3' incision and the C-terminal half is responsible for the 5' incision. The sequence is that of UvrABC system protein C from Malacoplasma penetrans (strain HF-2) (Mycoplasma penetrans).